Here is a 145-residue protein sequence, read N- to C-terminus: Large ribosomal subunit protein uL15 (145 aa).

Residues 20–39 form a disordered region; the sequence is GRVGKHRKHPSGRGNAGGEH.

This sequence belongs to the universal ribosomal protein uL15 family.

The chain is Large ribosomal subunit protein uL15 (RPL27A) from Trypanosoma brucei brucei.